Reading from the N-terminus, the 721-residue chain is Leucine-rich repeat flightless-interacting protein 2 (721 aa).

The segment at 1-370 (MGTPASGRKR…YMQGLKELKE (370 aa)) is DVL3-binding. Residue Ser18 is modified to Phosphoserine. A coiled-coil region spans residues 22–49 (EALSNIAREAEARLAAKRAARAEARDIR). Gly96, Leu101, Tyr168, Ser173, Ser190, and Ser202 each carry phosphoserine. Disordered stretches follow at residues 232 to 262 (SARSSPGFTNDDTASIVSSDRASRGRRESVV) and 295 to 338 (KSDK…IDPD). Composition is skewed to polar residues over residues 237-251 (PGFTNDDTASIVSSD) and 305-338 (TRPSSRNSASATTPLSGNSSRRGSGDTSSLIDPD). Residues Ser309, Ser312, Ser320, Ser324, and Ser328 each carry the phosphoserine modification. At Thr331 the chain carries Phosphothreonine. Ser332 and Ser333 each carry phosphoserine. Coiled-coil stretches lie at residues 349–524 (DLKD…GEKH) and 566–714 (LDVR…KANR).

Belongs to the LRRFIP family. As to quaternary structure, interacts (via N-terminus) with DVL3. Interacts with FLII. Weakly interacts with MYD88 in resting cells. Following LPS-stimulation, the interaction with MYD88 is rapidly enhanced; the complex gradually dissociates to basal levels after 6 hours of stimulation. Interaction with MYD88 is regulated by LPS-induced phosphorylation at Ser-202. In the presence of LPS, competes with FLII for MYD88-binding. Post-translationally, ser-190 and Ser-202 are phosphorylated in response to LPS stimulation. Ser-202 phosphorylation regulates the LPS-induced interaction with MYD88. In terms of tissue distribution, widely expressed, with highest levels in heart and skeletal muscle.

May function as activator of the canonical Wnt signaling pathway, in association with DVL3, upstream of CTNNB1/beta-catenin. Positively regulates Toll-like receptor (TLR) signaling in response to agonist probably by competing with the negative FLII regulator for MYD88-binding. The polypeptide is Leucine-rich repeat flightless-interacting protein 2 (LRRFIP2) (Homo sapiens (Human)).